The sequence spans 100 residues: Urease subunit gamma (100 aa).

It belongs to the urease gamma subunit family. As to quaternary structure, heterotrimer of UreA (gamma), UreB (beta) and UreC (alpha) subunits. Three heterotrimers associate to form the active enzyme.

The protein resides in the cytoplasm. It carries out the reaction urea + 2 H2O + H(+) = hydrogencarbonate + 2 NH4(+). The protein operates within nitrogen metabolism; urea degradation; CO(2) and NH(3) from urea (urease route): step 1/1. The sequence is that of Urease subunit gamma from Corynebacterium efficiens (strain DSM 44549 / YS-314 / AJ 12310 / JCM 11189 / NBRC 100395).